Reading from the N-terminus, the 359-residue chain is Aromatic amino acid aminotransferase (359 aa).

Over residues 1–12 the composition is skewed to basic and acidic residues; that stretch reads MSETSPKLRAEL. The disordered stretch occupies residues 1 to 21; the sequence is MSETSPKLRAELEGIPTYKPG. Lysine 223 is subject to N6-(pyridoxal phosphate)lysine.

Belongs to the class-II pyridoxal-phosphate-dependent aminotransferase family. Homodimer. Requires pyridoxal 5'-phosphate as cofactor.

The enzyme catalyses an aromatic L-alpha-amino acid + 2-oxoglutarate = an aromatic oxo-acid + L-glutamate. In terms of biological role, aminotransferase that catalyzes the conversion of aromatic amino acids and 2-oxoglutarate into corresponding aromatic oxo acids and L-glutamate. In Streptomyces coelicolor (strain ATCC BAA-471 / A3(2) / M145), this protein is Aromatic amino acid aminotransferase.